The primary structure comprises 745 residues: Interleukin-17 receptor D (745 aa).

Residues 1-26 (MAGSRRLAHFFMASCLFLCYTASVNG) form the signal peptide. The Extracellular portion of the chain corresponds to 27 to 298 (GKRGNSDKCS…VHSPWAGPIR (272 aa)). 6 N-linked (GlcNAc...) asparagine glycosylation sites follow: Asn61, Asn79, Asn136, Asn170, Asn205, and Asn276. A helical transmembrane segment spans residues 299 to 319 (AMAITVPLVIMSAFATLFTVM). Topologically, residues 320 to 745 (CRKKQQENIY…SEGLIAAAST (426 aa)) are cytoplasmic. Residues 354 to 518 (RPKIFICYSS…LMDQLPQLFA (165 aa)) form the SEFIR domain. Disordered stretches follow at residues 432-454 (RHRK…DSSS) and 631-713 (REDL…PPAV). Basic and acidic residues predominate over residues 439-448 (TSKEKNREPS). The segment covering 693-705 (SSLADSVSSSSGL) has biased composition (low complexity).

As to quaternary structure, interacts with fgfr1 and fgfr2.

Its subcellular location is the membrane. Its function is as follows. Feedback inhibitor of fibroblast growth factor mediated Ras-MAPK signaling and ERK activation. May inhibit FGF-induced FGFR1 tyrosine phosphorylation. This chain is Interleukin-17 receptor D (il17rd), found in Danio rerio (Zebrafish).